A 115-amino-acid polypeptide reads, in one-letter code: NADH-ubiquinone oxidoreductase chain 3 (115 aa).

Transmembrane regions (helical) follow at residues 4-24 (IVIL…AFWL), 55-75 (FFLI…LLPL), and 84-104 (TYFT…GLMY).

This sequence belongs to the complex I subunit 3 family. As to quaternary structure, core subunit of respiratory chain NADH dehydrogenase (Complex I) which is composed of 45 different subunits. Interacts with TMEM186. Interacts with TMEM242.

Its subcellular location is the mitochondrion inner membrane. It catalyses the reaction a ubiquinone + NADH + 5 H(+)(in) = a ubiquinol + NAD(+) + 4 H(+)(out). In terms of biological role, core subunit of the mitochondrial membrane respiratory chain NADH dehydrogenase (Complex I) which catalyzes electron transfer from NADH through the respiratory chain, using ubiquinone as an electron acceptor. Essential for the catalytic activity of complex I. The sequence is that of NADH-ubiquinone oxidoreductase chain 3 from Eligmodontia typus (Highland gerbil mouse).